Reading from the N-terminus, the 183-residue chain is uncharacterized protein (183 aa).

The disordered stretch occupies residues Glu136–Lys183. The segment covering Asn170 to Lys183 has biased composition (basic residues).

This is an uncharacterized protein from Homo sapiens (Human).